Consider the following 560-residue polypeptide: Probable sulfate transporter MT1781 (560 aa).

Transmembrane regions (helical) follow at residues 29-49 (VLAGLTVAAYLIPQAMAYATV), 51-71 (GLPPAAGLWASIAPLAIYALL), 79-99 (IGPESATALMTAAVLAPMAAG), 105-125 (AVLAATLGLLVGLICLLAGTA), 138-158 (VLVGYMAGIALVMISSQLGTI), 184-204 (WPTFVLAMSVLALLTMLTRWA), 207-227 (APGPIIAVLAATMLVAVMSLD), 256-276 (ALIIPAAGIAIVTFTDGVLTA), 333-353 (LIALGLVVIVMVFASGLLAMF), 355-375 (IAALGALVVYAALRLIDLSEF), and 394-414 (AAVLGLGVFYGVLAAVALSIL). One can recognise an STAS domain in the interval 442 to 557 (DYPQAKRVPG…MTLPTAVQAF (116 aa)).

It belongs to the SLC26A/SulP transporter (TC 2.A.53) family.

The protein localises to the cell membrane. This chain is Probable sulfate transporter MT1781, found in Mycobacterium tuberculosis (strain CDC 1551 / Oshkosh).